The chain runs to 226 residues: Cytidylate kinase (226 aa).

An ATP-binding site is contributed by 11-19; sequence GPAGAGKST.

This sequence belongs to the cytidylate kinase family. Type 1 subfamily.

Its subcellular location is the cytoplasm. The enzyme catalyses CMP + ATP = CDP + ADP. The catalysed reaction is dCMP + ATP = dCDP + ADP. The sequence is that of Cytidylate kinase from Pelotomaculum thermopropionicum (strain DSM 13744 / JCM 10971 / SI).